An 80-amino-acid polypeptide reads, in one-letter code: Sulfur carrier protein TusA (80 aa).

The Cysteine persulfide intermediate role is filled by cysteine 17.

Belongs to the sulfur carrier protein TusA family.

It is found in the cytoplasm. Sulfur carrier protein which probably makes part of a sulfur-relay system. The sequence is that of Sulfur carrier protein TusA from Pseudomonas entomophila (strain L48).